The following is a 152-amino-acid chain: UPF0266 membrane protein YobD (152 aa).

A run of 3 helical transmembrane segments spans residues 6–26 (LVLI…QFIM), 45–65 (IDSV…VTNH), and 67–87 (ALIT…IFWI).

The protein belongs to the UPF0266 family.

It localises to the cell inner membrane. The polypeptide is UPF0266 membrane protein YobD (Shigella dysenteriae serotype 1 (strain Sd197)).